We begin with the raw amino-acid sequence, 214 residues long: Thymidylate kinase (214 aa).

Glycine 10–threonine 17 contributes to the ATP binding site.

It belongs to the thymidylate kinase family.

It catalyses the reaction dTMP + ATP = dTDP + ADP. In terms of biological role, phosphorylation of dTMP to form dTDP in both de novo and salvage pathways of dTTP synthesis. This chain is Thymidylate kinase, found in Lacticaseibacillus casei (strain BL23) (Lactobacillus casei).